A 480-amino-acid polypeptide reads, in one-letter code: Cytochrome b-c1 complex subunit 1, mitochondrial (480 aa).

The N-terminal 34 residues, Met1–Gly34, are a transit peptide targeting the mitochondrion. Lys111 and Lys138 each carry N6-acetyllysine. At Lys163 the chain carries N6-acetyllysine; alternate. An N6-succinyllysine; alternate modification is found at Lys163. Position 212 is a phosphoserine (Ser212). Thr214 bears the Phosphothreonine mark.

It belongs to the peptidase M16 family. UQCRC1/QCR1 subfamily. In terms of assembly, component of the ubiquinol-cytochrome c oxidoreductase (cytochrome b-c1 complex, complex III, CIII), a multisubunit enzyme composed of 11 subunits. The complex is composed of 3 respiratory subunits cytochrome b, cytochrome c1 and Rieske protein UQCRFS1, 2 core protein subunits UQCRC1/QCR1 and UQCRC2/QCR2, and 6 low-molecular weight protein subunits UQCRH/QCR6, UQCRB/QCR7, UQCRQ/QCR8, UQCR10/QCR9, UQCR11/QCR10 and subunit 9, the cleavage product of Rieske protein UQCRFS1. The complex exists as an obligatory dimer and forms supercomplexes (SCs) in the inner mitochondrial membrane with NADH-ubiquinone oxidoreductase (complex I, CI) and cytochrome c oxidase (complex IV, CIV), resulting in different assemblies (supercomplex SCI(1)III(2)IV(1) and megacomplex MCI(2)III(2)IV(2)). Interacts with UQCC6. Interacts with STMP1.

The protein resides in the mitochondrion inner membrane. Component of the ubiquinol-cytochrome c oxidoreductase, a multisubunit transmembrane complex that is part of the mitochondrial electron transport chain which drives oxidative phosphorylation. The respiratory chain contains 3 multisubunit complexes succinate dehydrogenase (complex II, CII), ubiquinol-cytochrome c oxidoreductase (cytochrome b-c1 complex, complex III, CIII) and cytochrome c oxidase (complex IV, CIV), that cooperate to transfer electrons derived from NADH and succinate to molecular oxygen, creating an electrochemical gradient over the inner membrane that drives transmembrane transport and the ATP synthase. The cytochrome b-c1 complex catalyzes electron transfer from ubiquinol to cytochrome c, linking this redox reaction to translocation of protons across the mitochondrial inner membrane, with protons being carried across the membrane as hydrogens on the quinol. In the process called Q cycle, 2 protons are consumed from the matrix, 4 protons are released into the intermembrane space and 2 electrons are passed to cytochrome c. The 2 core subunits UQCRC1/QCR1 and UQCRC2/QCR2 are homologous to the 2 mitochondrial-processing peptidase (MPP) subunits beta-MPP and alpha-MPP respectively, and they seem to have preserved their MPP processing properties. May be involved in the in situ processing of UQCRFS1 into the mature Rieske protein and its mitochondrial targeting sequence (MTS)/subunit 9 when incorporated into complex III. Seems to play an important role in the maintenance of proper mitochondrial function in nigral dopaminergic neurons. This is Cytochrome b-c1 complex subunit 1, mitochondrial (Uqcrc1) from Rattus norvegicus (Rat).